Consider the following 371-residue polypeptide: Geranylgeranyl pyrophosphate synthase paxG (371 aa).

Isopentenyl diphosphate is bound by residues Lys-89, Arg-92, and His-121. Mg(2+) is bound by residues Asp-128 and Asp-132. Arg-137 serves as a coordination point for dimethylallyl diphosphate. Arg-138 serves as a coordination point for isopentenyl diphosphate. Residues Lys-215, Thr-216, and Gln-249 each contribute to the dimethylallyl diphosphate site. Mg(2+) is bound at residue Asp-252. Asn-256, Lys-266, and Lys-276 together coordinate dimethylallyl diphosphate. A Peroxisomal targeting signal motif is present at residues 369–371 (GRV).

It belongs to the FPP/GGPP synthase family. It depends on Mg(2+) as a cofactor.

It localises to the peroxisome. It catalyses the reaction isopentenyl diphosphate + dimethylallyl diphosphate = (2E)-geranyl diphosphate + diphosphate. The enzyme catalyses isopentenyl diphosphate + (2E)-geranyl diphosphate = (2E,6E)-farnesyl diphosphate + diphosphate. The catalysed reaction is isopentenyl diphosphate + (2E,6E)-farnesyl diphosphate = (2E,6E,10E)-geranylgeranyl diphosphate + diphosphate. It functions in the pathway secondary metabolite biosynthesis. Geranylgeranyl pyrophosphate synthase; part of the gene cluster that mediates the biosynthesis of paxilline, a mycotoxin that acts as an inhibitor of mammalian maxi-K channels. PaxG, the geranylgeranyl diphosphate (GGPP) synthase is proposed to catalyze the first step in paxilline biosynthesis. Condensation of indole-3-glycerol phosphate with GGPP by paxC then forms 3-geranylgeranylindole (3-GGI), followed by epoxidation and cyclization of this intermediate (by paxM and paxB) to form paspaline. Paspaline is subsequently converted to 13-desoxypaxilline by paxP, the latter being then converted to paxilline by paxQ. Finally paxilline can be mono- and di-prenylated by paxD. The sequence is that of Geranylgeranyl pyrophosphate synthase paxG from Penicillium paxilli.